A 371-amino-acid chain; its full sequence is tRNA-specific 2-thiouridylase MnmA (371 aa).

ATP-binding positions include 13-20 (GMSGGVDS) and methionine 39. An interaction with target base in tRNA region spans residues 99 to 101 (NPD). The active-site Nucleophile is the cysteine 104. A disulfide bridge links cysteine 104 with cysteine 200. Glycine 128 contacts ATP. The segment at 150-152 (KDQ) is interaction with tRNA. The active-site Cysteine persulfide intermediate is cysteine 200. Positions 308-309 (RY) are interaction with tRNA.

The protein belongs to the MnmA/TRMU family.

It is found in the cytoplasm. The enzyme catalyses S-sulfanyl-L-cysteinyl-[protein] + uridine(34) in tRNA + AH2 + ATP = 2-thiouridine(34) in tRNA + L-cysteinyl-[protein] + A + AMP + diphosphate + H(+). Its function is as follows. Catalyzes the 2-thiolation of uridine at the wobble position (U34) of tRNA, leading to the formation of s(2)U34. This is tRNA-specific 2-thiouridylase MnmA from Listeria innocua serovar 6a (strain ATCC BAA-680 / CLIP 11262).